We begin with the raw amino-acid sequence, 387 residues long: Solute carrier family 25 protein Shawn (387 aa).

Solcar repeat units lie at residues 37–156 (IRPL…FKAR), 179–263 (IPFL…LKSS), and 269–366 (PTFS…GKSF). A run of 6 helical transmembrane segments spans residues 43-63 (VASACTGAMVTACFMTPLDVI), 128-148 (LWSGLSPTLISALPSTIIYFV), 179-199 (IPFLVPLLAGVSGRILAVTCV), 235-255 (LWRGLPPTILRDVPFSGIYWT), 275-295 (FAAGAISGSVAATITTPFDVV), and 337-357 (AIFSGLGPRLFKVAPACAIMI).

Belongs to the mitochondrial carrier (TC 2.A.29) family.

Its subcellular location is the mitochondrion inner membrane. Its function is as follows. Mitochondrial transporter required for glutathione import into mitochondria. In Drosophila melanogaster (Fruit fly), this protein is Solute carrier family 25 protein Shawn.